The primary structure comprises 129 residues: ATP synthase epsilon chain (129 aa).

It belongs to the ATPase epsilon chain family. In terms of assembly, F-type ATPases have 2 components, CF(1) - the catalytic core - and CF(0) - the membrane proton channel. CF(1) has five subunits: alpha(3), beta(3), gamma(1), delta(1), epsilon(1). CF(0) has three main subunits: a, b and c.

It is found in the cell inner membrane. In terms of biological role, produces ATP from ADP in the presence of a proton gradient across the membrane. The polypeptide is ATP synthase epsilon chain (Campylobacter curvus (strain 525.92)).